The following is a 326-amino-acid chain: Flap endonuclease 1 (326 aa).

Positions 1 to 98 are N-domain; it reads MGVQFNDSIP…KTREERRKVK (98 aa). Aspartate 27, aspartate 80, glutamate 152, glutamate 154, aspartate 173, aspartate 175, and aspartate 224 together coordinate Mg(2+). The interval 116–245 is I-domain; it reads DMQKYAKRIN…KKALTIIKNK (130 aa). The segment at 318–326 is interaction with PCNA; the sequence is SQTSLDSWF.

This sequence belongs to the XPG/RAD2 endonuclease family. FEN1 subfamily. In terms of assembly, interacts with PCNA. PCNA stimulates the nuclease activity without altering cleavage specificity. It depends on Mg(2+) as a cofactor.

Its function is as follows. Structure-specific nuclease with 5'-flap endonuclease and 5'-3' exonuclease activities involved in DNA replication and repair. During DNA replication, cleaves the 5'-overhanging flap structure that is generated by displacement synthesis when DNA polymerase encounters the 5'-end of a downstream Okazaki fragment. Binds the unpaired 3'-DNA end and kinks the DNA to facilitate 5' cleavage specificity. Cleaves one nucleotide into the double-stranded DNA from the junction in flap DNA, leaving a nick for ligation. Also involved in the base excision repair (BER) pathway. Acts as a genome stabilization factor that prevents flaps from equilibrating into structures that lead to duplications and deletions. Also possesses 5'-3' exonuclease activity on nicked or gapped double-stranded DNA. The sequence is that of Flap endonuclease 1 from Methanococcus aeolicus (strain ATCC BAA-1280 / DSM 17508 / OCM 812 / Nankai-3).